The primary structure comprises 167 residues: uncharacterized protein (167 aa).

This is an uncharacterized protein from Magallana gigas (Pacific oyster).